The following is a 774-amino-acid chain: Dapper homolog 2 (774 aa).

Positions P67 to K93 form a coiled coil. Disordered stretches follow at residues R188–A225, T295–T319, T345–K500, and C624–S710. Residues V438 to A452 are compositionally biased toward polar residues. Residues R637–P648 show a composition bias toward low complexity. Composition is skewed to basic and acidic residues over residues A655 to P672 and S686 to S700. The PDZ-binding motif lies at M771–V774.

Belongs to the dapper family. In terms of assembly, can form homodimers and heterodimers with DACT1 or DACT3. Interacts with CSNK1D, PKA catalytic subunit, PKC-type kinase, CSNK2B, DVL1, DVL2, DVL3, VANGL1, VANGL2, TGFBR1, CTNNB1, CTNND2, CTNND1, LEF1, TCF7, TCF7L1 and HDAC1.

Functionally, involved in regulation of intracellular signaling pathways during development. Negatively regulates the Nodal signaling pathway, possibly by promoting the lysosomal degradation of Nodal receptors, such as TGFBR1. May be involved in control of the morphogenetic behavior of kidney ureteric bud cells by keeping cells epithelial and restraining their mesenchymal character. May play an inhibitory role in the re-epithelialization of skin wounds by attenuating TGF-beta signaling. This Homo sapiens (Human) protein is Dapper homolog 2 (DACT2).